The chain runs to 436 residues: Antilisterial bacteriocin subtilosin biosynthesis protein AlbD (436 aa).

10 consecutive transmembrane segments (helical) span residues 27-47 (IAAG…QAGI), 55-75 (TYII…SVTS), 113-133 (LFFF…GAQT), 134-154 (LFWL…GVVL), 164-184 (LMFL…ALMP), 187-207 (TIPL…PVFL), 240-260 (AMLL…FQMM), 270-290 (IYIV…LYSI), 315-335 (FYSG…GFIS), and 395-415 (AILA…LVIV).

The protein resides in the cell membrane. Its function is as follows. Involved in the production of the bacteriocin subtilosin. Required for immunity to subtilosin. The sequence is that of Antilisterial bacteriocin subtilosin biosynthesis protein AlbD (albD) from Bacillus subtilis (strain 168).